Consider the following 282-residue polypeptide: Undecaprenyl-diphosphatase (282 aa).

7 helical membrane passes run 40–60 (GAAF…IYFY), 87–107 (MGWM…LFKT), 116–136 (LYWI…AEWL), 153–173 (IGWK…IPGS), 196–216 (FSFL…LYET), 229–249 (NLAV…AFLI), and 256–276 (STAL…GLIA).

The protein belongs to the UppP family.

It is found in the cell inner membrane. The enzyme catalyses di-trans,octa-cis-undecaprenyl diphosphate + H2O = di-trans,octa-cis-undecaprenyl phosphate + phosphate + H(+). Functionally, catalyzes the dephosphorylation of undecaprenyl diphosphate (UPP). Confers resistance to bacitracin. This is Undecaprenyl-diphosphatase from Chlorobium phaeobacteroides (strain BS1).